A 153-amino-acid chain; its full sequence is Ribosomal RNA large subunit methyltransferase H (153 aa).

S-adenosyl-L-methionine-binding positions include Leu70, Gly102, and 121–126 (LSRMTF).

This sequence belongs to the RNA methyltransferase RlmH family. In terms of assembly, homodimer.

The protein localises to the cytoplasm. The enzyme catalyses pseudouridine(1915) in 23S rRNA + S-adenosyl-L-methionine = N(3)-methylpseudouridine(1915) in 23S rRNA + S-adenosyl-L-homocysteine + H(+). Its function is as follows. Specifically methylates the pseudouridine at position 1915 (m3Psi1915) in 23S rRNA. The chain is Ribosomal RNA large subunit methyltransferase H from Geotalea daltonii (strain DSM 22248 / JCM 15807 / FRC-32) (Geobacter daltonii).